Reading from the N-terminus, the 458-residue chain is Bifunctional protein GlmU (458 aa).

Residues 1–229 (MTNYAIILAA…FNESLGVNDR (229 aa)) form a pyrophosphorylase region. UDP-N-acetyl-alpha-D-glucosamine contacts are provided by residues 8–11 (LAAG), Lys22, Gln72, and 77–78 (GT). Residue Asp102 participates in Mg(2+) binding. 4 residues coordinate UDP-N-acetyl-alpha-D-glucosamine: Gly139, Glu154, Asn169, and Asn227. Position 227 (Asn227) interacts with Mg(2+). Residues 230–250 (VALATAESVMRRRINKAHMIN) are linker. The segment at 251-458 (GVTFQNPDAT…AKRLPHYPQK (208 aa)) is N-acetyltransferase. UDP-N-acetyl-alpha-D-glucosamine contacts are provided by Arg332 and Lys350. Catalysis depends on His362, which acts as the Proton acceptor. Tyr365 and Asn376 together coordinate UDP-N-acetyl-alpha-D-glucosamine. Residues Ala379, 385 to 386 (NY), Ser404, Ala422, and Arg439 contribute to the acetyl-CoA site.

This sequence in the N-terminal section; belongs to the N-acetylglucosamine-1-phosphate uridyltransferase family. The protein in the C-terminal section; belongs to the transferase hexapeptide repeat family. Homotrimer. Mg(2+) is required as a cofactor.

It localises to the cytoplasm. It carries out the reaction alpha-D-glucosamine 1-phosphate + acetyl-CoA = N-acetyl-alpha-D-glucosamine 1-phosphate + CoA + H(+). The enzyme catalyses N-acetyl-alpha-D-glucosamine 1-phosphate + UTP + H(+) = UDP-N-acetyl-alpha-D-glucosamine + diphosphate. It participates in nucleotide-sugar biosynthesis; UDP-N-acetyl-alpha-D-glucosamine biosynthesis; N-acetyl-alpha-D-glucosamine 1-phosphate from alpha-D-glucosamine 6-phosphate (route II): step 2/2. Its pathway is nucleotide-sugar biosynthesis; UDP-N-acetyl-alpha-D-glucosamine biosynthesis; UDP-N-acetyl-alpha-D-glucosamine from N-acetyl-alpha-D-glucosamine 1-phosphate: step 1/1. It functions in the pathway bacterial outer membrane biogenesis; LPS lipid A biosynthesis. In terms of biological role, catalyzes the last two sequential reactions in the de novo biosynthetic pathway for UDP-N-acetylglucosamine (UDP-GlcNAc). The C-terminal domain catalyzes the transfer of acetyl group from acetyl coenzyme A to glucosamine-1-phosphate (GlcN-1-P) to produce N-acetylglucosamine-1-phosphate (GlcNAc-1-P), which is converted into UDP-GlcNAc by the transfer of uridine 5-monophosphate (from uridine 5-triphosphate), a reaction catalyzed by the N-terminal domain. This chain is Bifunctional protein GlmU, found in Streptococcus uberis (strain ATCC BAA-854 / 0140J).